The chain runs to 200 residues: LexA repressor (200 aa).

The H-T-H motif DNA-binding region spans 28–48; that stretch reads RAEISNRLGFRSANAAEEHLK. Active-site for autocatalytic cleavage activity residues include Ser121 and Lys158.

It belongs to the peptidase S24 family. In terms of assembly, homodimer.

It catalyses the reaction Hydrolysis of Ala-|-Gly bond in repressor LexA.. Functionally, represses a number of genes involved in the response to DNA damage (SOS response), including recA and lexA. In the presence of single-stranded DNA, RecA interacts with LexA causing an autocatalytic cleavage which disrupts the DNA-binding part of LexA, leading to derepression of the SOS regulon and eventually DNA repair. The protein is LexA repressor of Hahella chejuensis (strain KCTC 2396).